Reading from the N-terminus, the 314-residue chain is Cyclin-dependent kinase 2 (314 aa).

The Protein kinase domain occupies 8-287 (FQRAEKIGEG…AKDALQHAYF (280 aa)). ATP is bound by residues 14-22 (IGEGTYGIV) and K37. The residue at position 18 (T18) is a Phosphothreonine. Y19 bears the Phosphotyrosine mark. D130 functions as the Proton acceptor in the catalytic mechanism. A Phosphotyrosine modification is found at Y162. T163 carries the post-translational modification Phosphothreonine.

The protein belongs to the protein kinase superfamily. CMGC Ser/Thr protein kinase family. CDC2/CDKX subfamily. Interacts with cyclin CycG.

It catalyses the reaction L-seryl-[protein] + ATP = O-phospho-L-seryl-[protein] + ADP + H(+). The enzyme catalyses L-threonyl-[protein] + ATP = O-phospho-L-threonyl-[protein] + ADP + H(+). The catalysed reaction is [DNA-directed RNA polymerase] + ATP = phospho-[DNA-directed RNA polymerase] + ADP + H(+). Its function is as follows. Like Cdk1, could play a key role in the control of the eukaryotic cell cycle. This is Cyclin-dependent kinase 2 from Drosophila melanogaster (Fruit fly).